A 702-amino-acid chain; its full sequence is MA3 DOMAIN-CONTAINING TRANSLATION REGULATORY FACTOR 3 (702 aa).

The interval 1 to 100 is disordered; sequence MEGFLTDQQR…PNDPNYDSGE (100 aa). Over residues 53–65 the composition is skewed to basic residues; that stretch reads VKHRRSHAGRSIR. The segment covering 81-91 has biased composition (basic and acidic residues); it reads IDTDGDYHIDP. The MI 1 domain occupies 116-237; it reads DYKKAAASII…PPAFLPRAAK (122 aa). The short motif at 267–274 is the Nuclear localization signal 1 element; that stretch reads ERRWGGQT. MI domains are found at residues 280 to 401, 414 to 535, and 577 to 697; these read EVKK…PSGE, RFKE…EISS, and DAKD…SLTE. Residues 615 to 622 carry the Nuclear localization signal 2 motif; sequence VKKALVMG.

This sequence belongs to the PDCD4 family. In terms of assembly, interacts with EIN2, ETR2 and EIN4. Binds to EIF4A1. The association with ribosomes is modulated by cellular energy status and TOR activity. As to expression, mostly expressed in vegetative tissues, such as leaves and stems, and, to a lower extent, in roots and reproductive tissues, such as flower buds and flowers. Expressed in seedlings, roots, cauline leaf tips and flowers.

The protein localises to the nucleus. The protein resides in the cytoplasm. It localises to the cytosol. Involved in target of rapamycin (TOR)-regulated translation control, especially under energy-deficient conditions. Involved in the regulation of the ethylene-mediated signaling pathway. Involved in salt stress responses. Reduced cotyledons size and early flowering. The chain is MA3 DOMAIN-CONTAINING TRANSLATION REGULATORY FACTOR 3 from Arabidopsis thaliana (Mouse-ear cress).